A 690-amino-acid chain; its full sequence is Crooked neck-like protein 1 (690 aa).

16 HAT repeats span residues 61–93 (DYKL…WEES), 95–127 (KEIQ…MEMK), 129–161 (RQVN…MEEM), 163–194 (GNVA…FELR), 196–227 (KEVE…FEEK), 229–264 (AYFA…FEEN), 266–300 (KEFE…FEKK), 310–342 (IIVS…LVES), 344–378 (AEAD…LWVN), 388–424 (KDPE…FEIR), 459–491 (REFD…LETI), 493–527 (GDIE…FEIE), 529–560 (EETE…FELS), 565–606 (GSVA…EFGT), 608–646 (SDKE…YIFP), and 648–673 (DAAN…EREA). A mediates interaction with HSP90 region spans residues 250 to 467 (MDEHLYVAFA…LREFDRCRKL (218 aa)). S342 carries the phosphoserine modification. The Nuclear localization signal signature appears at 618-626 (PEKVKKRRK). Residues 667–679 (QQQEREAAEQDPD) are compositionally biased toward basic and acidic residues. The segment at 667–690 (QQQEREAAEQDPDKDIDESESSSF) is disordered. Residues 680 to 690 (KDIDESESSSF) are compositionally biased toward acidic residues. S689 carries the post-translational modification Phosphoserine.

This sequence belongs to the crooked-neck family. As to quaternary structure, identified in the spliceosome C complex. Present in a spliceosome complex assembled in vitro containing CRNKL1, HPRP8BP and SNRPB2. Component of the minor spliceosome, which splices U12-type introns. Interacts with PPIL2 (via the PPIase cyclophilin-type domain); they may form a trimeric complex with HSP90.

It is found in the nucleus. The protein localises to the nucleus speckle. Functionally, involved in pre-mRNA splicing process. As a component of the minor spliceosome, involved in the splicing of U12-type introns in pre-mRNAs. The protein is Crooked neck-like protein 1 (Crnkl1) of Mus musculus (Mouse).